The chain runs to 179 residues: Transcription termination/antitermination protein NusG (179 aa).

Residues 130-157 (EGDVVQIIDGAFMGQEGRVVEIENNKVK) enclose the KOW domain.

Belongs to the NusG family.

Participates in transcription elongation, termination and antitermination. The polypeptide is Transcription termination/antitermination protein NusG (Streptococcus pyogenes serotype M1).